We begin with the raw amino-acid sequence, 407 residues long: S-adenosylmethionine synthase (407 aa).

His-15 is an ATP binding site. Asp-17 serves as a coordination point for Mg(2+). Glu-43 serves as a coordination point for K(+). The L-methionine site is built by Glu-56 and Gln-99. Positions 99–109 are flexible loop; the sequence is QSPDIARGVDT. The disordered stretch occupies residues 112–131; that stretch reads ERRGGGTAPGGPGDELDRQG. Residues 179-181, 252-253, Asp-261, 267-268, Ala-284, and Lys-288 contribute to the ATP site; these read DGK, RF, and RK. Asp-261 lines the L-methionine pocket. Lys-292 is an L-methionine binding site.

The protein belongs to the AdoMet synthase family. As to quaternary structure, homotetramer; dimer of dimers. The cofactor is Mg(2+). It depends on K(+) as a cofactor.

It is found in the cytoplasm. The catalysed reaction is L-methionine + ATP + H2O = S-adenosyl-L-methionine + phosphate + diphosphate. The protein operates within amino-acid biosynthesis; S-adenosyl-L-methionine biosynthesis; S-adenosyl-L-methionine from L-methionine: step 1/1. In terms of biological role, catalyzes the formation of S-adenosylmethionine (AdoMet) from methionine and ATP. The overall synthetic reaction is composed of two sequential steps, AdoMet formation and the subsequent tripolyphosphate hydrolysis which occurs prior to release of AdoMet from the enzyme. The sequence is that of S-adenosylmethionine synthase from Streptomyces fradiae (Streptomyces roseoflavus).